Here is a 197-residue protein sequence, read N- to C-terminus: Proteasome subunit beta 1 (197 aa).

Positions 1 to 6 (MNRKTG) are cleaved as a propeptide — removed in mature form; by autocatalysis. Catalysis depends on Thr-7, which acts as the Nucleophile.

Belongs to the peptidase T1B family. As to quaternary structure, the 20S proteasome core is composed of 14 alpha and 14 beta subunits that assemble into four stacked heptameric rings, resulting in a barrel-shaped structure. The two inner rings, each composed of seven catalytic beta subunits, are sandwiched by two outer rings, each composed of seven alpha subunits. The catalytic chamber with the active sites is on the inside of the barrel. Has a gated structure, the ends of the cylinder being occluded by the N-termini of the alpha-subunits. Is capped at one or both ends by the proteasome regulatory ATPase, PAN.

Its subcellular location is the cytoplasm. It carries out the reaction Cleavage of peptide bonds with very broad specificity.. The formation of the proteasomal ATPase PAN-20S proteasome complex, via the docking of the C-termini of PAN into the intersubunit pockets in the alpha-rings, triggers opening of the gate for substrate entry. Interconversion between the open-gate and close-gate conformations leads to a dynamic regulation of the 20S proteasome proteolysis activity. Component of the proteasome core, a large protease complex with broad specificity involved in protein degradation. This Pyrococcus abyssi (strain GE5 / Orsay) protein is Proteasome subunit beta 1.